The sequence spans 445 residues: Phosphoglucosamine mutase (445 aa).

The Phosphoserine intermediate role is filled by S102. Positions 102, 241, 243, and 245 each coordinate Mg(2+). S102 carries the post-translational modification Phosphoserine.

Belongs to the phosphohexose mutase family. Mg(2+) serves as cofactor. Activated by phosphorylation.

The catalysed reaction is alpha-D-glucosamine 1-phosphate = D-glucosamine 6-phosphate. In terms of biological role, catalyzes the conversion of glucosamine-6-phosphate to glucosamine-1-phosphate. This is Phosphoglucosamine mutase from Shewanella oneidensis (strain ATCC 700550 / JCM 31522 / CIP 106686 / LMG 19005 / NCIMB 14063 / MR-1).